The primary structure comprises 109 residues: Putative transporter-like protein YIL171W (109 aa).

Residues 1 to 22 (MSGVNNTSANDLSTTESNSNSA) are compositionally biased toward polar residues. Positions 1 to 40 (MSGVNNTSANDLSTTESNSNSAVGAPSVKTEHGDSKDSLN) are disordered. The Cytoplasmic segment spans residues 1 to 56 (MSGVNNTSANDLSTTESNSNSAVGAPSVKTEHGDSKDSLNLDATEAPIDLPQKPLS). Over residues 29–39 (KTEHGDSKDSL) the composition is skewed to basic and acidic residues. Residues 57 to 77 (AYTTVAILCLMIAFGGFIFGW) traverse the membrane as a helical segment. The Extracellular portion of the chain corresponds to 78-109 (DTGTISGFVNLSDFIRRFGQKKTTRGLTTYRK). Asparagine 87 carries N-linked (GlcNAc...) asparagine glycosylation.

The protein belongs to the major facilitator superfamily. Sugar transporter (TC 2.A.1.1) family.

Its subcellular location is the cell membrane. Its function is as follows. Probable glucose transporter. This Saccharomyces cerevisiae (strain ATCC 204508 / S288c) (Baker's yeast) protein is Putative transporter-like protein YIL171W.